A 106-amino-acid polypeptide reads, in one-letter code: Minor capsid protein VP2 (106 aa).

It belongs to the vesivirus VP2 protein family. Homooligomer. The portal-like structure consists in 12 copies of VP2. Interacts with capsid protein VP1.

The protein resides in the virion. It is found in the host cytoplasm. Functionally, minor structural protein that forms a portal-like structure at a unique three-fold axis of symmetry, following binding to the host receptor. The virion attaches to feline junctional adhesion molecule A (F11R). Once attached, the virion is endocytosed. Acidification of the endosome induces conformational change of capsid protein thereby injecting virus genomic RNA into host cytoplasm. The channel formed by VP2 may allow the delivery of the viral genome through the host endosomal membrane. This chain is Minor capsid protein VP2, found in Feline calicivirus (strain Japanese F4) (FCV).